Consider the following 448-residue polypeptide: Probable intron-encoded endonuclease bI1 (448 aa).

The cob exon 1 encoded stretch occupies residues 1-132 (MRLLKSHPLL…LMMATAFLGY (132 aa)). 3 helical membrane passes run 32 to 52 (FGSL…TLAM), 86 to 106 (ASAF…YGSY), and 112 to 132 (LVWA…FLGY). The tract at residues 133 to 448 (QHSPKWFDIS…QWIVEDFSDK (316 aa)) is cob intron 1 encoded. A GIY-YIG domain is found at 230–321 (DLSGVYMIIN…LKLLVPNYNI (92 aa)).

It to endonucleases of group I introns of fungi and phage. Post-translationally, the mature protein may arise from proteolytic cleavage of an in-frame translation of cob exon 1 plus intron 1, containing the bI1 open reading frame.

The protein localises to the mitochondrion inner membrane. In terms of biological role, mitochondrial DNA endonuclease involved in intron homing. The protein is Probable intron-encoded endonuclease bI1 (bI1) of Neurospora crassa (strain ATCC 24698 / 74-OR23-1A / CBS 708.71 / DSM 1257 / FGSC 987).